Consider the following 278-residue polypeptide: Sulfur carrier protein FdhD (278 aa).

Residue Cys121 is the Cysteine persulfide intermediate of the active site. A Mo-bis(molybdopterin guanine dinucleotide)-binding site is contributed by 260–265 (FCKPGR).

It belongs to the FdhD family.

The protein resides in the cytoplasm. Required for formate dehydrogenase (FDH) activity. Acts as a sulfur carrier protein that transfers sulfur from IscS to the molybdenum cofactor prior to its insertion into FDH. The chain is Sulfur carrier protein FdhD from Escherichia coli O127:H6 (strain E2348/69 / EPEC).